Reading from the N-terminus, the 271-residue chain is Formamidopyrimidine-DNA glycosylase (271 aa).

The active-site Schiff-base intermediate with DNA is the Pro2. Glu3 acts as the Proton donor in catalysis. The Proton donor; for beta-elimination activity role is filled by Lys58. Residues His91, Arg110, and Arg152 each contribute to the DNA site. Residues 237 to 271 (WVYGRTGQPCRKCGALVSKTRQGQRSSFFCAQCQK) form an FPG-type zinc finger. Arg261 serves as the catalytic Proton donor; for delta-elimination activity.

The protein belongs to the FPG family. In terms of assembly, monomer. It depends on Zn(2+) as a cofactor.

The catalysed reaction is Hydrolysis of DNA containing ring-opened 7-methylguanine residues, releasing 2,6-diamino-4-hydroxy-5-(N-methyl)formamidopyrimidine.. The enzyme catalyses 2'-deoxyribonucleotide-(2'-deoxyribose 5'-phosphate)-2'-deoxyribonucleotide-DNA = a 3'-end 2'-deoxyribonucleotide-(2,3-dehydro-2,3-deoxyribose 5'-phosphate)-DNA + a 5'-end 5'-phospho-2'-deoxyribonucleoside-DNA + H(+). In terms of biological role, involved in base excision repair of DNA damaged by oxidation or by mutagenic agents. Acts as a DNA glycosylase that recognizes and removes damaged bases. Has a preference for oxidized purines, such as 7,8-dihydro-8-oxoguanine (8-oxoG). Has AP (apurinic/apyrimidinic) lyase activity and introduces nicks in the DNA strand. Cleaves the DNA backbone by beta-delta elimination to generate a single-strand break at the site of the removed base with both 3'- and 5'-phosphates. The sequence is that of Formamidopyrimidine-DNA glycosylase from Nitrosomonas eutropha (strain DSM 101675 / C91 / Nm57).